The following is a 695-amino-acid chain: IQ domain-containing protein E (695 aa).

A disordered region spans residues 29–55 (KAKRKAFHKPPPTSPKSPYLSKPRKVA). 3 coiled-coil regions span residues 157–264 (LHVQ…RLQT), 292–358 (SALL…SSKS), and 387–477 (NKDH…CPEV). A Phosphoserine modification is found at Ser322. 4 disordered regions span residues 357–390 (KSHA…NKDH), 465–521 (EMKK…RRDA), 564–599 (ASKA…TGSP), and 618–695 (RARH…NFPV). Positions 465–482 (EMKKEEKEDCPEVPHKAQ) are enriched in basic and acidic residues. 2 consecutive IQ domains span residues 542–571 (LDEA…HGSE) and 601–630 (QEEA…RTTT).

In terms of assembly, component of the EvC complex composed of EFCAB7, IQCE, EVC2 and EVC; built from two subcomplexes, EVC2:EVC and EFCAB7:IQCE. Interacts (via N-terminus) with EFCAB7 (via EF-hands 1 and 2); this interaction anchors the EVC-EVC2 complex in a signaling microdomain at the base of cilia and stimulates the Hedgehog (Hh) pathway. Interacts with EVC2 (via N-terminal end). Interacts with EVC.

Its subcellular location is the cell projection. It localises to the cilium membrane. In terms of biological role, component of the EvC complex that positively regulates ciliary Hedgehog (Hh) signaling. Required for proper limb morphogenesis. The chain is IQ domain-containing protein E (IQCE) from Homo sapiens (Human).